A 231-amino-acid chain; its full sequence is UPF0173 metal-dependent hydrolase AF_1265 (231 aa).

Belongs to the UPF0173 family.

This Archaeoglobus fulgidus (strain ATCC 49558 / DSM 4304 / JCM 9628 / NBRC 100126 / VC-16) protein is UPF0173 metal-dependent hydrolase AF_1265.